The following is a 1180-amino-acid chain: DNA-directed RNA polymerase subunit beta (1180 aa).

This sequence belongs to the RNA polymerase beta chain family. In terms of assembly, the RNAP catalytic core consists of 2 alpha, 1 beta, 1 beta' and 1 omega subunit. When a sigma factor is associated with the core the holoenzyme is formed, which can initiate transcription.

The catalysed reaction is RNA(n) + a ribonucleoside 5'-triphosphate = RNA(n+1) + diphosphate. DNA-dependent RNA polymerase catalyzes the transcription of DNA into RNA using the four ribonucleoside triphosphates as substrates. In Macrococcus caseolyticus (strain JCSC5402) (Macrococcoides caseolyticum), this protein is DNA-directed RNA polymerase subunit beta.